The following is a 412-amino-acid chain: Citrate synthase (412 aa).

Catalysis depends on residues H305 and D364.

This sequence belongs to the citrate synthase family.

The catalysed reaction is oxaloacetate + acetyl-CoA + H2O = citrate + CoA + H(+). Its pathway is carbohydrate metabolism; tricarboxylic acid cycle; isocitrate from oxaloacetate: step 1/2. The polypeptide is Citrate synthase (gltA) (Rickettsia bellii).